The primary structure comprises 152 residues: 3-hydroxyacyl-[acyl-carrier-protein] dehydratase FabZ (152 aa).

His-54 is an active-site residue.

The protein belongs to the thioester dehydratase family. FabZ subfamily.

The protein resides in the cytoplasm. The enzyme catalyses a (3R)-hydroxyacyl-[ACP] = a (2E)-enoyl-[ACP] + H2O. Involved in unsaturated fatty acids biosynthesis. Catalyzes the dehydration of short chain beta-hydroxyacyl-ACPs and long chain saturated and unsaturated beta-hydroxyacyl-ACPs. This is 3-hydroxyacyl-[acyl-carrier-protein] dehydratase FabZ from Roseobacter denitrificans (strain ATCC 33942 / OCh 114) (Erythrobacter sp. (strain OCh 114)).